A 308-amino-acid chain; its full sequence is Ribonuclease 3 (308 aa).

The RNase III domain occupies 20 to 145; the sequence is YLRFYKMLGF…LVGAIYLDRG (126 aa). A Mg(2+)-binding site is contributed by E62. Residue D66 is part of the active site. N131 and E134 together coordinate Mg(2+). E134 is an active-site residue. The DRBM domain maps to 173-242; that stretch reads NFKSKLIEWS…ARVALGKIKN (70 aa). Positions 261–281 are disordered; that stretch reads QEEVTVSDSKPSDSGAVTPDL.

This sequence belongs to the ribonuclease III family. In terms of assembly, homodimer. Mg(2+) is required as a cofactor.

Its subcellular location is the cytoplasm. It catalyses the reaction Endonucleolytic cleavage to 5'-phosphomonoester.. Digests double-stranded RNA. Involved in the processing of primary rRNA transcript to yield the immediate precursors to the large and small rRNAs (23S and 16S). Processes some mRNAs, and tRNAs when they are encoded in the rRNA operon. Processes pre-crRNA and tracrRNA of type II CRISPR loci if present in the organism. The polypeptide is Ribonuclease 3 (Phocaeicola vulgatus (strain ATCC 8482 / DSM 1447 / JCM 5826 / CCUG 4940 / NBRC 14291 / NCTC 11154) (Bacteroides vulgatus)).